The sequence spans 316 residues: Protoheme IX farnesyltransferase (316 aa).

8 helical membrane-spanning segments follow: residues 35-55, 56-76, 119-139, 156-176, 183-203, 229-246, 250-272, and 283-303; these read VMVL…GHVQ, PAIG…SGCL, VVLG…TIVF, IVIG…VVTG, LILF…LALI, IVWY…PVAL, GLVY…IRVL, and AAMG…SALL.

This sequence belongs to the UbiA prenyltransferase family. Protoheme IX farnesyltransferase subfamily.

The protein resides in the cell inner membrane. It catalyses the reaction heme b + (2E,6E)-farnesyl diphosphate + H2O = Fe(II)-heme o + diphosphate. It participates in porphyrin-containing compound metabolism; heme O biosynthesis; heme O from protoheme: step 1/1. Functionally, converts heme B (protoheme IX) to heme O by substitution of the vinyl group on carbon 2 of heme B porphyrin ring with a hydroxyethyl farnesyl side group. The protein is Protoheme IX farnesyltransferase of Methylobacterium radiotolerans (strain ATCC 27329 / DSM 1819 / JCM 2831 / NBRC 15690 / NCIMB 10815 / 0-1).